The sequence spans 577 residues: Outer spore wall assembly protein SHE10 (577 aa).

Residues 1–23 form the signal peptide; sequence MGKLIKLITTLTVLVSLLQYCCE. Coiled coils occupy residues 379–416 and 513–561; these read NETR…ENVE and ILRS…EEDV. Basic and acidic residues predominate over residues 525–545; it reads RERKERERKEREKAAAEEFQR. Residues 525–577 are disordered; the sequence is RERKERERKEREKAAAEEFQRQQELLLQQEEEDEEDVSYTSTSTITTTTTMTL. The segment covering 562–577 has biased composition (low complexity); it reads SYTSTSTITTTTTMTL.

The protein belongs to the SHE10 family. In terms of assembly, component of the mitochondria-localized RNase mitochondrial RNA-processing (RNase MRP) composed of one single RNA encoded by the NME1 gene and at least 31 proteins. Absent in the nucleus-localized RNase MRP (NuMRP).

The protein localises to the mitochondrion. Involved in spore wall assembly. May be a component of the mitochondrial RNase MRP (MtMRP), a ribonucleoprotein endoribonuclease involved in the cleaving RNA transcripts to generate primers for DNA replication in mitochondria. The protein is Outer spore wall assembly protein SHE10 of Saccharomyces cerevisiae (strain RM11-1a) (Baker's yeast).